The following is a 673-amino-acid chain: NADH-quinone oxidoreductase chain 3 (673 aa).

One can recognise a 2Fe-2S ferredoxin-type domain in the interval 5–90 (RKIKIDDTII…PSEIRTNSPM (86 aa)). The [2Fe-2S] cluster site is built by Cys37, Cys48, Cys51, and Cys66. The 4Fe-4S His(Cys)3-ligated-type domain occupies 90-129 (MVKKAREGVMEFLLINHPLDCPICDQGGECDLQDQAMAYG). [4Fe-4S] cluster-binding residues include His106, Cys110, Cys113, Cys119, Cys158, Cys161, Cys164, and Cys208. Residues 227 to 283 (LTKTESIDVMDALGSSIRIDTKGREVMRILPRNHDGVNEEWISDKTRFVWDGLRRQR) enclose the 4Fe-4S Mo/W bis-MGD-type domain.

Belongs to the complex I 75 kDa subunit family. NDH-1 is composed of at least 14 different subunits, Nqo1 to Nqo14. The complex has a L-shaped structure, with the hydrophobic arm (subunits Nqo7, Nqo8, Nqo10 to Nqo14) embedded in the inner membrane and the hydrophilic peripheral arm (subunits Nqo1 to Nqo6, Nqo9) protruding into the bacterial cytoplasm. The hydrophilic domain contains all the redox centers. Requires [2Fe-2S] cluster as cofactor. [4Fe-4S] cluster is required as a cofactor.

The protein resides in the cell inner membrane. It carries out the reaction a quinone + NADH + 5 H(+)(in) = a quinol + NAD(+) + 4 H(+)(out). Its function is as follows. NDH-1 shuttles electrons from NADH, via FMN and iron-sulfur (Fe-S) centers, to quinones in the respiratory chain. The immediate electron acceptor for the enzyme in this species is believed to be ubiquinone. Couples the redox reaction to proton translocation (for every two electrons transferred, four hydrogen ions are translocated across the cytoplasmic membrane), and thus conserves the redox energy in a proton gradient. The sequence is that of NADH-quinone oxidoreductase chain 3 from Paracoccus denitrificans.